The sequence spans 358 residues: Alanine racemase (358 aa).

Residue K35 is the Proton acceptor; specific for D-alanine of the active site. K35 is modified (N6-(pyridoxal phosphate)lysine). R130 is a binding site for substrate. The active-site Proton acceptor; specific for L-alanine is Y255. Position 303 (M303) interacts with substrate.

This sequence belongs to the alanine racemase family. Pyridoxal 5'-phosphate serves as cofactor.

It catalyses the reaction L-alanine = D-alanine. It functions in the pathway amino-acid biosynthesis; D-alanine biosynthesis; D-alanine from L-alanine: step 1/1. In terms of biological role, catalyzes the interconversion of L-alanine and D-alanine. May also act on other amino acids. The polypeptide is Alanine racemase (alr) (Shewanella baltica (strain OS195)).